Here is a 360-residue protein sequence, read N- to C-terminus: MKPSIYGLTRDELIAWAIDNGQKAFRATQIWDWLYRKRVQSFDEMTNISKEFVAILKDSFCINPLKQRVAQESADGTVKYLFELPDGMLIETVLMRQHYGQSVCVTTQVGCNIGCTFCASGLIKKQRDLNSGEITAQIMMVQNYFDKRAQDERVSHVVVMGIGEPFDNYQNVMTFLRTINDDHGLAIGARHITVSTSGLAHKIREFANEGVQVNLAVSLHAPNNELRSSIMRINRSFPLDKLFSAIEYYIETTNRRVTFEYIMLNKVNDGVEQAQELADLTKRIRKLSYVNLIPYNPVSEHDQYSRSPKERVAAFYDILKKNGVNCVVRQEHGTDIDAACGQLRSNTMKKDRQKAAAART.

Residue glutamate 91 is the Proton acceptor of the active site. The 239-residue stretch at 97–335 (QHYGQSVCVT…CVVRQEHGTD (239 aa)) folds into the Radical SAM core domain. A disulfide bond links cysteine 104 and cysteine 340. [4Fe-4S] cluster contacts are provided by cysteine 111, cysteine 115, and cysteine 118. S-adenosyl-L-methionine-binding positions include 163 to 164 (GE), serine 195, 218 to 220 (SLH), and asparagine 296. Residue cysteine 340 is the S-methylcysteine intermediate of the active site.

Belongs to the radical SAM superfamily. RlmN family. [4Fe-4S] cluster serves as cofactor.

It localises to the cytoplasm. The enzyme catalyses adenosine(2503) in 23S rRNA + 2 reduced [2Fe-2S]-[ferredoxin] + 2 S-adenosyl-L-methionine = 2-methyladenosine(2503) in 23S rRNA + 5'-deoxyadenosine + L-methionine + 2 oxidized [2Fe-2S]-[ferredoxin] + S-adenosyl-L-homocysteine. It catalyses the reaction adenosine(37) in tRNA + 2 reduced [2Fe-2S]-[ferredoxin] + 2 S-adenosyl-L-methionine = 2-methyladenosine(37) in tRNA + 5'-deoxyadenosine + L-methionine + 2 oxidized [2Fe-2S]-[ferredoxin] + S-adenosyl-L-homocysteine. Functionally, specifically methylates position 2 of adenine 2503 in 23S rRNA and position 2 of adenine 37 in tRNAs. This is Probable dual-specificity RNA methyltransferase RlmN from Streptococcus equi subsp. equi (strain 4047).